The primary structure comprises 193 residues: Ion-translocating oxidoreductase complex subunit A (193 aa).

Transmembrane regions (helical) follow at residues L5–L25, F47–L67, L72–V92, L102–L122, A134–I154, and A171–V191.

The protein belongs to the NqrDE/RnfAE family. In terms of assembly, the complex is composed of six subunits: RnfA, RnfB, RnfC, RnfD, RnfE and RnfG.

The protein resides in the cell inner membrane. Part of a membrane-bound complex that couples electron transfer with translocation of ions across the membrane. The chain is Ion-translocating oxidoreductase complex subunit A from Cronobacter sakazakii (strain ATCC BAA-894) (Enterobacter sakazakii).